Here is a 731-residue protein sequence, read N- to C-terminus: Penicillin-binding protein 2a (731 aa).

Over 1-56 (MKLDKLFEKFLSLFKKETSELEDSDSTILRRSRSDRKKLAQVGPIRKFWRRYHLTK) the chain is Cytoplasmic. The helical; Signal-anchor for type II membrane protein transmembrane segment at 57–77 (IILILGLSAGLLVGIYLFAVA) threads the bilayer. A hydrophobic; associated with cytoplasmic membrane. Required for transglycosylase activity, but not for lipid II binding region spans residues 78-156 (KSTNVNDLQN…FLAIVTAGRS (79 aa)). Positions 78-300 (KSTNVNDLQN…SQLHDKYEGK (223 aa)) are transglycosylase. Residues 78 to 731 (KSTNVNDLQN…IWDSIVNLFR (654 aa)) lie on the Extracellular side of the membrane. Residue glutamate 131 is the Proton donor; for transglycosylase activity of the active site. The tract at residues 301–731 (ISDYRYPSYF…IWDSIVNLFR (431 aa)) is transpeptidase. Serine 410 functions as the Acyl-ester intermediate; for transpeptidase activity in the catalytic mechanism. The interval 674–694 (ANTKRQVQTNDNSQTDDNLSD) is disordered. Residues 676 to 690 (TKRQVQTNDNSQTDD) are compositionally biased toward polar residues.

This sequence in the N-terminal section; belongs to the glycosyltransferase 51 family. It in the C-terminal section; belongs to the transpeptidase family. In terms of assembly, homodimer. May also form higher order oligomers. Self-association may depend on its transmembrane and/or cytoplasmic regions. Interacts with MacP; interaction is required for the function of this protein.

It localises to the cell membrane. Its subcellular location is the secreted. The protein resides in the cell wall. The enzyme catalyses Preferential cleavage: (Ac)2-L-Lys-D-Ala-|-D-Ala. Also transpeptidation of peptidyl-alanyl moieties that are N-acyl substituents of D-alanine.. It catalyses the reaction [GlcNAc-(1-&gt;4)-Mur2Ac(oyl-L-Ala-gamma-D-Glu-L-Lys-D-Ala-D-Ala)](n)-di-trans,octa-cis-undecaprenyl diphosphate + beta-D-GlcNAc-(1-&gt;4)-Mur2Ac(oyl-L-Ala-gamma-D-Glu-L-Lys-D-Ala-D-Ala)-di-trans,octa-cis-undecaprenyl diphosphate = [GlcNAc-(1-&gt;4)-Mur2Ac(oyl-L-Ala-gamma-D-Glu-L-Lys-D-Ala-D-Ala)](n+1)-di-trans,octa-cis-undecaprenyl diphosphate + di-trans,octa-cis-undecaprenyl diphosphate + H(+). It functions in the pathway cell wall biogenesis; peptidoglycan biosynthesis. Cell wall formation. Synthesis of cross-linked peptidoglycan (PG) from the lipid intermediates. Binds dansylated lipid II and catalyzes the polymerization of glycan chains. Hydrolyzes S2d (N-benzoyl-D-alanylmercaptoacetic acid) molecule, a synthetic thiolester analog of cell wall stem peptide. Active against bocillin, a fluorescent penicillin. No transpeptidase activity with non-fluorescent lysine-containing lipid II as substrate. The polypeptide is Penicillin-binding protein 2a (Streptococcus pneumoniae serotype 2 (strain D39 / NCTC 7466)).